We begin with the raw amino-acid sequence, 362 residues long: NAD(P)H-quinone oxidoreductase subunit 1, chloroplastic (362 aa).

8 helical membrane-spanning segments follow: residues 29–49 (ILPI…IVWL), 103–123 (IAVI…HFVL), 128–148 (IGVF…LMAG), 164–184 (AAQS…ISLL), 202–222 (FFGW…ISSL), 247–267 (YSGI…LVSS), 303–323 (TMGI…SITI), and 342–362 (FLLP…LVSL).

The protein belongs to the complex I subunit 1 family. In terms of assembly, NDH is composed of at least 16 different subunits, 5 of which are encoded in the nucleus.

It is found in the plastid. The protein resides in the chloroplast thylakoid membrane. It catalyses the reaction a plastoquinone + NADH + (n+1) H(+)(in) = a plastoquinol + NAD(+) + n H(+)(out). The enzyme catalyses a plastoquinone + NADPH + (n+1) H(+)(in) = a plastoquinol + NADP(+) + n H(+)(out). Functionally, NDH shuttles electrons from NAD(P)H:plastoquinone, via FMN and iron-sulfur (Fe-S) centers, to quinones in the photosynthetic chain and possibly in a chloroplast respiratory chain. The immediate electron acceptor for the enzyme in this species is believed to be plastoquinone. Couples the redox reaction to proton translocation, and thus conserves the redox energy in a proton gradient. The protein is NAD(P)H-quinone oxidoreductase subunit 1, chloroplastic of Hordeum vulgare (Barley).